We begin with the raw amino-acid sequence, 176 residues long: Peptide deformylase (176 aa).

Fe cation contacts are provided by cysteine 92 and histidine 134. Residue glutamate 135 is part of the active site. Histidine 138 serves as a coordination point for Fe cation.

It belongs to the polypeptide deformylase family. Fe(2+) is required as a cofactor.

It catalyses the reaction N-terminal N-formyl-L-methionyl-[peptide] + H2O = N-terminal L-methionyl-[peptide] + formate. Functionally, removes the formyl group from the N-terminal Met of newly synthesized proteins. Requires at least a dipeptide for an efficient rate of reaction. N-terminal L-methionine is a prerequisite for activity but the enzyme has broad specificity at other positions. This Acinetobacter baumannii (strain SDF) protein is Peptide deformylase.